Reading from the N-terminus, the 254-residue chain is MKLVIVKDYAELSRKAAEMLVSEVKANPKTVLGLATGGTPVGMYRELIKLSQAQSIDYSQASSFNLDEYVGLSSTHPQSYRSYMEENLFNHINIPAEKTHVPVGNTTDHLAECARYEEAIRLAGGIDIQVLGIGNNGHIGFNEPGSPADSLTRVVQLTDSTIEANARYFDSVEQVPTQAVSMGIKTILGAKKVVLLASGEAKAEAVRLMLEEEPTADVPASLLQLHRDVTVIVDQEAASKLTTSILAGTKPSGS.

The active-site Proton acceptor; for enolization step is the Asp-67. Asn-136 (for ring-opening step) is an active-site residue. His-138 (proton acceptor; for ring-opening step) is an active-site residue. Glu-143 (for ring-opening step) is an active-site residue.

The protein belongs to the glucosamine/galactosamine-6-phosphate isomerase family. NagB subfamily.

The catalysed reaction is alpha-D-glucosamine 6-phosphate + H2O = beta-D-fructose 6-phosphate + NH4(+). It participates in amino-sugar metabolism; N-acetylneuraminate degradation; D-fructose 6-phosphate from N-acetylneuraminate: step 5/5. Functionally, catalyzes the reversible isomerization-deamination of glucosamine 6-phosphate (GlcN6P) to form fructose 6-phosphate (Fru6P) and ammonium ion. This is Glucosamine-6-phosphate deaminase from Brevibacillus brevis (strain 47 / JCM 6285 / NBRC 100599).